A 119-amino-acid polypeptide reads, in one-letter code: Aspartate 1-decarboxylase (119 aa).

Residue Ser25 is the Schiff-base intermediate with substrate; via pyruvic acid of the active site. Pyruvic acid (Ser) is present on Ser25. Position 57 (Thr57) interacts with substrate. Residue Tyr58 is the Proton donor of the active site. A substrate-binding site is contributed by 73–75 (GAA).

It belongs to the PanD family. In terms of assembly, heterooctamer of four alpha and four beta subunits. Pyruvate serves as cofactor. Is synthesized initially as an inactive proenzyme, which is activated by self-cleavage at a specific serine bond to produce a beta-subunit with a hydroxyl group at its C-terminus and an alpha-subunit with a pyruvoyl group at its N-terminus.

It localises to the cytoplasm. It catalyses the reaction L-aspartate + H(+) = beta-alanine + CO2. It participates in cofactor biosynthesis; (R)-pantothenate biosynthesis; beta-alanine from L-aspartate: step 1/1. Catalyzes the pyruvoyl-dependent decarboxylation of aspartate to produce beta-alanine. The polypeptide is Aspartate 1-decarboxylase (Desulfotalea psychrophila (strain LSv54 / DSM 12343)).